We begin with the raw amino-acid sequence, 82 residues long: DNA-directed RNA polymerase subunit Rpo5 (82 aa).

This sequence belongs to the archaeal Rpo5/eukaryotic RPB5 RNA polymerase subunit family. As to quaternary structure, part of the RNA polymerase complex.

It is found in the cytoplasm. The catalysed reaction is RNA(n) + a ribonucleoside 5'-triphosphate = RNA(n+1) + diphosphate. Its function is as follows. DNA-dependent RNA polymerase (RNAP) catalyzes the transcription of DNA into RNA using the four ribonucleoside triphosphates as substrates. In Thermococcus kodakarensis (strain ATCC BAA-918 / JCM 12380 / KOD1) (Pyrococcus kodakaraensis (strain KOD1)), this protein is DNA-directed RNA polymerase subunit Rpo5.